A 127-amino-acid chain; its full sequence is Glycine cleavage system H protein (127 aa).

In terms of domain architecture, Lipoyl-binding spans 22-104 (EAVIGITHFA…YTEGWMLRVK (83 aa)). The residue at position 63 (Lys63) is an N6-lipoyllysine.

This sequence belongs to the GcvH family. As to quaternary structure, the glycine cleavage system is composed of four proteins: P, T, L and H. Requires (R)-lipoate as cofactor.

Functionally, the glycine cleavage system catalyzes the degradation of glycine. The H protein shuttles the methylamine group of glycine from the P protein to the T protein. In Nitratidesulfovibrio vulgaris (strain DP4) (Desulfovibrio vulgaris), this protein is Glycine cleavage system H protein.